The chain runs to 512 residues: MADTVRKPQKVVIVGAGPVGSLAALYAAARGDEVEVYELRGDLRDPSTIPLNFTKSINLALSERGINAMKHSNREELTKNVLRDTIPMYGRMIHGKDRGQLWEAAQAYDVHGRAINAVDRSTLNNALLDELEHTPNVKLFFNHKLTGADFRANKAWFERRVPGEAPLPNSANRVPEIEVDFDFMLGADGAHSAVRYHMMKFARVDYQQEYIDTLWCEFRIAPTENGEFRISPNHLHIWPGREFMFIALPSADKSFTCTLFAPAVHYTYLASSPQKLLDFFDVHFPGVSPELIPPADLQEQFATNPHLPLISLKCKPHHFGSSVAIVGDAAHAVLPFYGQGLNAGLEDIRVLFEVLDKHSVYDLDASHEARREAREKAFQAYTDQRCADTHAINDLSKENYVEMRWGVKTPLYKLRKSIEEILDRYVPSLGWQTQYSRVSFSNQRYSDVIKLARRQGTVLGLGLGSTFITAVGVAGYMMWKNPKQYSPLCFMRYCLRHVSHIWVKFFRNTAYA.

It belongs to the aromatic-ring hydroxylase family. KMO subfamily. The cofactor is FAD.

The protein resides in the mitochondrion outer membrane. It catalyses the reaction L-kynurenine + NADPH + O2 + H(+) = 3-hydroxy-L-kynurenine + NADP(+) + H2O. It functions in the pathway cofactor biosynthesis; NAD(+) biosynthesis; quinolinate from L-kynurenine: step 1/3. Functionally, catalyzes the hydroxylation of L-kynurenine (L-Kyn) to form 3-hydroxy-L-kynurenine (L-3OHKyn). Required for synthesis of quinolinic acid. This is Kynurenine 3-monooxygenase (bna4) from Aspergillus clavatus (strain ATCC 1007 / CBS 513.65 / DSM 816 / NCTC 3887 / NRRL 1 / QM 1276 / 107).